The chain runs to 127 residues: MARVKRSVNAKKKRREVLNSAKGYRGQRSRLYRKAKEQMLHSKTYAFRDRRARKGEFRKLWIQRINAAARQNDMTYNRLIQGLKLAEIEVDRKVLAELAVSDAAAFTALCEAAKAALPEDVNAPAAS.

The protein belongs to the bacterial ribosomal protein bL20 family.

Binds directly to 23S ribosomal RNA and is necessary for the in vitro assembly process of the 50S ribosomal subunit. It is not involved in the protein synthesizing functions of that subunit. The chain is Large ribosomal subunit protein bL20 from Corynebacterium urealyticum (strain ATCC 43042 / DSM 7109).